Here is a 548-residue protein sequence, read N- to C-terminus: Luciferin 4-monooxygenase (548 aa).

Residues 546–548 (AKM) carry the Microbody targeting signal motif.

It belongs to the ATP-dependent AMP-binding enzyme family. Homodimer. Requires Mg(2+) as cofactor.

It localises to the peroxisome. The enzyme catalyses firefly D-luciferin + ATP + O2 = firefly oxyluciferin + hnu + AMP + CO2 + diphosphate. With respect to regulation, inhibited by ATP analogs and sodium deoxycholate. Activated by choline-containing phospholipids. In terms of biological role, produces green light with a wavelength of 570 nm. This is Luciferin 4-monooxygenase from Luciola mingrelica (Southern Russian firefly).